Here is a 445-residue protein sequence, read N- to C-terminus: Rab GDP dissociation inhibitor beta (445 aa).

Position 1 is an N-acetylmethionine (methionine 1). The residue at position 112 (lysine 112) is an N6-acetyllysine. Serine 130 carries the phosphoserine modification. Lysine 269 is modified (N6-acetyllysine). Position 382 is a phosphoserine (serine 382).

It belongs to the Rab GDI family. In terms of assembly, interacts with RHOH. Interacts with the GDP-bound inactive forms of RAB3A, RAB3B, RAB3C, RAB5A, RAB5B, RAB5C, RAB8A, RAB8B, RAB10, RAB12, RAB35, and RAB43; binds RAB3D to a lesser extent. Interacts with DZIP1; this interaction negatively regulates the interaction of GDI2 with GDP-bound RAB8A.

It is found in the cytoplasm. Its subcellular location is the membrane. The protein resides in the golgi apparatus. It localises to the trans-Golgi network. Functionally, GDP-dissociation inhibitor preventing the GDP to GTP exchange of most Rab proteins. By keeping these small GTPases in their inactive GDP-bound form regulates intracellular membrane trafficking. Negatively regulates protein transport to the cilium and ciliogenesis through the inhibition of RAB8A. The protein is Rab GDP dissociation inhibitor beta (GDI2) of Sus scrofa (Pig).